The sequence spans 117 residues: Large ribosomal subunit protein bL20c (117 aa).

The protein belongs to the bacterial ribosomal protein bL20 family.

It localises to the plastid. The protein localises to the chloroplast. In terms of biological role, binds directly to 23S ribosomal RNA and is necessary for the in vitro assembly process of the 50S ribosomal subunit. It is not involved in the protein synthesizing functions of that subunit. The sequence is that of Large ribosomal subunit protein bL20c from Acorus calamus (Sweet flag).